The sequence spans 1235 residues: Spike glycoprotein (1235 aa).

Positions M1–L13 are cleaved as a signal peptide. A receptor binding site region spans residues M1 to K330. Residues G14–P1176 lie on the Extracellular side of the membrane. One can recognise a BetaCoV S1-NTD domain in the interval Y15–T296. Disulfide bonds link C21–C158, C153–C187, C165–C246, C284–C294, and C329–C354. Residues N31, N60, and N134 are each glycosylated (N-linked (GlcNAc...) asparagine; by host). N192 carries an N-linked (GlcNAc...) asparagine; by host glycan. The 151-residue stretch at P327–T477 folds into the BetaCoV S1-CTD domain. N357 carries N-linked (GlcNAc...) asparagine; by host glycosylation. 2 cysteine pairs are disulfide-bonded: C372–C425 and C384–C475. N435, N536, N568, N576, N599, N648, and N665 each carry an N-linked (GlcNAc...) asparagine; by host glycan. Fusion peptide stretches follow at residues S781–Y802 and E800–F820. A glycan (N-linked (GlcNAc...) asparagine; by host) is linked at N804. C805 and C816 form a disulfide bridge. The segment at Q881–F931 is heptad repeat 1. A coiled-coil region spans residues Q910 to I954. Residues N1091, N1101, N1120, N1136, and N1157 are each glycosylated (N-linked (GlcNAc...) asparagine; by host). The tract at residues A1125–E1165 is heptad repeat 2. The stretch at T1138–V1166 forms a coiled coil. Residues W1177 to I1197 traverse the membrane as a helical segment. Topologically, residues C1198–D1235 are cytoplasmic. The short motif at S1231 to D1235 is the KxHxx element.

The protein belongs to the betacoronaviruses spike protein family. As to quaternary structure, homotrimer; each monomer consists of a S1 and a S2 subunit. The resulting peplomers protrude from the virus surface as spikes. In terms of processing, specific enzymatic cleavages in vivo yield mature proteins. The precursor is processed into S1 and S2 by host cell furin or another cellular protease to yield the mature S1 and S2 proteins. Additionally, a second cleavage leads to the release of a fusion peptide after viral attachment to host cell receptor. Post-translationally, the cytoplasmic Cys-rich domain is palmitoylated. Spike glycoprotein is digested within host endosomes.

The protein localises to the virion membrane. It localises to the host endoplasmic reticulum-Golgi intermediate compartment membrane. It is found in the host cell membrane. Its function is as follows. Attaches the virion to the cell membrane by interacting with host receptor, initiating the infection. Functionally, mediates fusion of the virion and cellular membranes by acting as a class I viral fusion protein. Under the current model, the protein has at least three conformational states: pre-fusion native state, pre-hairpin intermediate state, and post-fusion hairpin state. During viral and target cell membrane fusion, the coiled coil regions (heptad repeats) assume a trimer-of-hairpins structure, positioning the fusion peptide in close proximity to the C-terminal region of the ectodomain. The formation of this structure appears to drive apposition and subsequent fusion of viral and target cell membranes. Acts as a viral fusion peptide which is unmasked following S2 cleavage occurring upon virus endocytosis. This Mus musculus (Mouse) protein is Spike glycoprotein.